An 859-amino-acid chain; its full sequence is DNA mismatch repair protein MutS (859 aa).

Position 622–629 (622–629 (GPNMGGKS)) interacts with ATP.

This sequence belongs to the DNA mismatch repair MutS family.

Its function is as follows. This protein is involved in the repair of mismatches in DNA. It is possible that it carries out the mismatch recognition step. This protein has a weak ATPase activity. The protein is DNA mismatch repair protein MutS of Coxiella burnetii (strain RSA 493 / Nine Mile phase I).